The primary structure comprises 125 residues: Natriuretic peptide GNP1 (125 aa).

A signal peptide spans 1-25 (MDPRLVRAGSLVLLLALLVQDQGAA). Disordered stretches follow at residues 23–78 (GAAH…PAFK) and 105–125 (VSGM…TGKK). Residues 26–85 (HPARAGQKYKPLIRRSEEDSQALGQEGDVAARAADEEEDAAGPGDALRQPAFKTLLASRE) constitute a propeptide that is removed on maturation. An intrachain disulfide couples C94 to C110.

The protein belongs to the natriuretic peptide family. As to expression, expressed by the venom gland.

The protein localises to the secreted. Its function is as follows. Exhibits natriuretic and vasodepressor activity. Acts by stimulating cGMP. The chain is Natriuretic peptide GNP1 from Varanus varius (Lace monitor lizard).